Reading from the N-terminus, the 231-residue chain is NADH-ubiquinone oxidoreductase chain 4 (231 aa).

6 consecutive transmembrane segments (helical) span residues 1 to 21, 34 to 54, 63 to 85, 89 to 111, 124 to 146, and 169 to 189; these read PIAG…YGII, LFLP…LTCL, IAYS…TPWG, AMAL…NMTY, GLHN…NIAI, and TIII…HMFL.

Belongs to the complex I subunit 4 family.

Its subcellular location is the mitochondrion membrane. It catalyses the reaction a ubiquinone + NADH + 5 H(+)(in) = a ubiquinol + NAD(+) + 4 H(+)(out). Functionally, core subunit of the mitochondrial membrane respiratory chain NADH dehydrogenase (Complex I) that is believed to belong to the minimal assembly required for catalysis. Complex I functions in the transfer of electrons from NADH to the respiratory chain. The immediate electron acceptor for the enzyme is believed to be ubiquinone. This Crotalus lepidus (Banded rock rattlesnake) protein is NADH-ubiquinone oxidoreductase chain 4 (MT-ND4).